A 155-amino-acid polypeptide reads, in one-letter code: SsrA-binding protein (155 aa).

This sequence belongs to the SmpB family.

It localises to the cytoplasm. Functionally, required for rescue of stalled ribosomes mediated by trans-translation. Binds to transfer-messenger RNA (tmRNA), required for stable association of tmRNA with ribosomes. tmRNA and SmpB together mimic tRNA shape, replacing the anticodon stem-loop with SmpB. tmRNA is encoded by the ssrA gene; the 2 termini fold to resemble tRNA(Ala) and it encodes a 'tag peptide', a short internal open reading frame. During trans-translation Ala-aminoacylated tmRNA acts like a tRNA, entering the A-site of stalled ribosomes, displacing the stalled mRNA. The ribosome then switches to translate the ORF on the tmRNA; the nascent peptide is terminated with the 'tag peptide' encoded by the tmRNA and targeted for degradation. The ribosome is freed to recommence translation, which seems to be the essential function of trans-translation. The protein is SsrA-binding protein of Streptococcus pneumoniae (strain 70585).